The sequence spans 392 residues: Formate-dependent phosphoribosylglycinamide formyltransferase (392 aa).

Residues 22-23 and Glu-82 each bind N(1)-(5-phospho-beta-D-ribosyl)glycinamide; that span reads EL. ATP is bound by residues Arg-114, Lys-155, 160 to 165, 195 to 198, and Glu-203; these read SSGKGQ and EGVV. In terms of domain architecture, ATP-grasp spans 119–308; that stretch reads RLAAEELGLP…EFALHVRAFL (190 aa). 2 residues coordinate Mg(2+): Glu-267 and Glu-279. Residues Asp-286, Lys-355, and 362 to 363 each bind N(1)-(5-phospho-beta-D-ribosyl)glycinamide; that span reads RR.

The protein belongs to the PurK/PurT family. In terms of assembly, homodimer.

The enzyme catalyses N(1)-(5-phospho-beta-D-ribosyl)glycinamide + formate + ATP = N(2)-formyl-N(1)-(5-phospho-beta-D-ribosyl)glycinamide + ADP + phosphate + H(+). Its pathway is purine metabolism; IMP biosynthesis via de novo pathway; N(2)-formyl-N(1)-(5-phospho-D-ribosyl)glycinamide from N(1)-(5-phospho-D-ribosyl)glycinamide (formate route): step 1/1. In terms of biological role, involved in the de novo purine biosynthesis. Catalyzes the transfer of formate to 5-phospho-ribosyl-glycinamide (GAR), producing 5-phospho-ribosyl-N-formylglycinamide (FGAR). Formate is provided by PurU via hydrolysis of 10-formyl-tetrahydrofolate. The sequence is that of Formate-dependent phosphoribosylglycinamide formyltransferase from Cronobacter sakazakii (strain ATCC BAA-894) (Enterobacter sakazakii).